A 290-amino-acid polypeptide reads, in one-letter code: MRAPLLLESRDYLLSEQMPVAVTNRYPQETFVEHTHQFCEIVIVWRGNGLHVLNDHPYRITCGDVFYIQAADHHSYESVHDLVLDNIIYCPERLHLNAQWHKLLPPLGPEQNQGYWRLTTQGMAQARPIIQQLAQESRKTDSWSIQLTEVLLLQLAIVLKRHRYRAEHAHLLPDGEQLDLIMSALQQSLGAYFDMADFCHKNQLVERSLKQLFRQQTGMSISHYLRQIRLCHAKCLLRGSEHRISDIAARCGFEDSNYFSAVFTREAGMTPRDYRQRFIRSPVLPAKNEP.

Positions 179–277 (DLIMSALQQS…GMTPRDYRQR (99 aa)) constitute an HTH araC/xylS-type domain. DNA-binding regions (H-T-H motif) lie at residues 196 to 217 (ADFC…RQQT) and 244 to 267 (ISDI…TREA).

As to quaternary structure, binds DNA as a dimer.

The protein localises to the cytoplasm. Activates expression of the rhaSR operon in response to L-rhamnose. The polypeptide is HTH-type transcriptional activator RhaR (Yersinia pseudotuberculosis serotype O:1b (strain IP 31758)).